The chain runs to 381 residues: MKAPIEVSPLAWLDAVEQQRRAAGLRRSLRPRPPVATELDLASNDYLGLSQHPDVIDGGVAALRLWGAGATGSRLVTGDTELHQQFESELADYVGAASGLLFSSGYAANLGAVVGLSGRGALVVSDAYSHASLVDACRLSRARVVVTPHRDVDAVLAALADRDEERAVVITESVFSTDGALAPLRELHEVCRRHRALLIVDEAHGLGVRGGGRGLVFEAGLAGAPDVVMTTTLSKALGSQGGAVLGPAAVRAHLIDAARTFIFDTGLAPAAVGAARAALGVLRAEPWRVGAVLRHAGVLAEVCRVREVPQSAVVSVILGDPDVAVAAATACLDAGVRVGCFRPPTVPAGTSRLRLTARASLDDAELEVARRVLTDVLAGLG.

Arginine 27 contacts substrate. 105–106 (GY) lines the pyridoxal 5'-phosphate pocket. Histidine 130 contacts substrate. Residues serine 176, 201 to 204 (DEAH), and 232 to 235 (TLSK) contribute to the pyridoxal 5'-phosphate site. Lysine 235 bears the N6-(pyridoxal phosphate)lysine mark. Residue threonine 345 participates in substrate binding.

It belongs to the class-II pyridoxal-phosphate-dependent aminotransferase family. BioF subfamily. Homodimer. It depends on pyridoxal 5'-phosphate as a cofactor.

The catalysed reaction is 6-carboxyhexanoyl-[ACP] + L-alanine + H(+) = (8S)-8-amino-7-oxononanoate + holo-[ACP] + CO2. Its pathway is cofactor biosynthesis; biotin biosynthesis. Its function is as follows. Catalyzes the decarboxylative condensation of pimeloyl-[acyl-carrier protein] and L-alanine to produce 8-amino-7-oxononanoate (AON), [acyl-carrier protein], and carbon dioxide. The sequence is that of 8-amino-7-oxononanoate synthase from Mycobacterium avium (strain 104).